The primary structure comprises 360 residues: uncharacterized protein (360 aa).

Residue 4–22 (KVLHIGAGGFGERWCDTFL) participates in NAD(+) binding.

In terms of biological role, could be a NAD-dependent oxidoreductase. This is an uncharacterized protein from Sinorhizobium fredii (strain NBRC 101917 / NGR234).